The primary structure comprises 330 residues: Beta-ketoacyl-[acyl-carrier-protein] synthase III (330 aa).

Residues cysteine 111 and histidine 249 contribute to the active site. The ACP-binding stretch occupies residues 250–254 (QANTR). Residue asparagine 279 is part of the active site.

Belongs to the thiolase-like superfamily. FabH family. Homodimer.

Its subcellular location is the cytoplasm. It catalyses the reaction malonyl-[ACP] + acetyl-CoA + H(+) = 3-oxobutanoyl-[ACP] + CO2 + CoA. Its pathway is lipid metabolism; fatty acid biosynthesis. Functionally, catalyzes the condensation reaction of fatty acid synthesis by the addition to an acyl acceptor of two carbons from malonyl-ACP. Catalyzes the first condensation reaction which initiates fatty acid synthesis and may therefore play a role in governing the total rate of fatty acid production. Possesses both acetoacetyl-ACP synthase and acetyl transacylase activities. Its substrate specificity determines the biosynthesis of branched-chain and/or straight-chain of fatty acids. This Pseudomonas aeruginosa (strain LESB58) protein is Beta-ketoacyl-[acyl-carrier-protein] synthase III.